We begin with the raw amino-acid sequence, 411 residues long: Phosphopentomutase (411 aa).

Residues aspartate 14, aspartate 306, histidine 311, aspartate 347, histidine 348, and histidine 359 each contribute to the Mn(2+) site.

Belongs to the phosphopentomutase family. Mn(2+) serves as cofactor.

The protein localises to the cytoplasm. It carries out the reaction 2-deoxy-alpha-D-ribose 1-phosphate = 2-deoxy-D-ribose 5-phosphate. The catalysed reaction is alpha-D-ribose 1-phosphate = D-ribose 5-phosphate. It functions in the pathway carbohydrate degradation; 2-deoxy-D-ribose 1-phosphate degradation; D-glyceraldehyde 3-phosphate and acetaldehyde from 2-deoxy-alpha-D-ribose 1-phosphate: step 1/2. In terms of biological role, isomerase that catalyzes the conversion of deoxy-ribose 1-phosphate (dRib-1-P) and ribose 1-phosphate (Rib-1-P) to deoxy-ribose 5-phosphate (dRib-5-P) and ribose 5-phosphate (Rib-5-P), respectively. The sequence is that of Phosphopentomutase from Lactococcus lactis subsp. lactis (strain IL1403) (Streptococcus lactis).